The chain runs to 536 residues: Butyrophilin-like protein 9 (536 aa).

Residues 1-35 form the signal peptide; the sequence is MADFSVFLGFLKQIPRCLSIFFTYLLFLQLWEVNS. Ig-like V-type domains are found at residues 36-149 and 152-241; these read DKVW…WELE and GSGS…KEFV. Residues 36 to 257 are Extracellular-facing; it reads DKVWVLGPEE…FLPRMSPWKK (222 aa). Cysteines 59 and 133 form a disulfide. Asn-102, Asn-139, and Asn-224 each carry an N-linked (GlcNAc...) asparagine glycan. Residues Cys-173 and Cys-227 are joined by a disulfide bond. Residues 258-278 form a helical membrane-spanning segment; that stretch reads AFVGTLVVLPLSLIVLTMLAL. At 279 to 536 the chain is on the cytoplasmic side; sequence RYFYKLRSFQ…PAWAVNEAVS (258 aa). The B30.2/SPRY domain maps to 307–506; the sequence is DWRRSEGQAE…MTICSLPVRG (200 aa).

The protein belongs to the immunoglobulin superfamily. BTN/MOG family.

It is found in the membrane. The polypeptide is Butyrophilin-like protein 9 (Btnl9) (Mus musculus (Mouse)).